The sequence spans 148 residues: uncharacterized protein (148 aa).

The interval 38–99 is disordered; it reads QFRRHHHAEH…RRHLRKGHLK (62 aa). A compositionally biased stretch (basic and acidic residues) spans 64-82; sequence FHHDGGRHGHATRIHENNR. Positions 83-99 are enriched in basic residues; that stretch reads RPHKRNRRRHLRKGHLK.

This is an uncharacterized protein from Fowl adenovirus A serotype 1 (strain CELO / Phelps) (FAdV-1).